Here is a 378-residue protein sequence, read N- to C-terminus: Serpin B6 (378 aa).

Methionine 1 is subject to N-acetylmethionine. Residue lysine 196 is modified to N6-acetyllysine.

This sequence belongs to the serpin family. Ov-serpin subfamily. Forms a complex with the monomeric form of beta-tryptase. In terms of tissue distribution, brain.

It is found in the cytoplasm. In terms of biological role, inhibitor of cathepsin G, kallikrein-8 and thrombin. May play an important role in the inner ear in the protection against leakage of lysosomal content during stress. May be involved in the regulation of serine proteinases present in the brain or extravasated from the blood. The protein is Serpin B6 (SERPINB6) of Bos taurus (Bovine).